We begin with the raw amino-acid sequence, 98 residues long: UPF0235 protein Pmen_4153 (98 aa).

The protein belongs to the UPF0235 family.

The polypeptide is UPF0235 protein Pmen_4153 (Ectopseudomonas mendocina (strain ymp) (Pseudomonas mendocina)).